The primary structure comprises 317 residues: Mitochondrial thiamine pyrophosphate carrier 1 (317 aa).

6 helical membrane passes run 15 to 37, 80 to 100, 118 to 138, 168 to 190, 205 to 227, and 281 to 300; these read TVSWYNSVIAGSVSGVFARMATA, IPATAMYVVYGAVQFGSYSWF, LTVGALAGMTSSVVSYPLDLL, GFFTGISTAMTTVTLSTAIMFLT, FWSRPVSASSGIIAGFVSKTMVF, and GLTMGLCKSVPTTAISLFVY. Solcar repeat units follow at residues 16–103, 112–197, and 206–306; these read VSWY…FNNV, SQQG…VNIV, and WSRP…TMDL.

It belongs to the mitochondrial carrier (TC 2.A.29) family.

It localises to the mitochondrion inner membrane. Its function is as follows. Mitochondrial transporter that mediates uptake of thiamine pyrophosphate (ThPP) into mitochondria. This is Mitochondrial thiamine pyrophosphate carrier 1 (TPC1) from Kluyveromyces lactis (strain ATCC 8585 / CBS 2359 / DSM 70799 / NBRC 1267 / NRRL Y-1140 / WM37) (Yeast).